The chain runs to 715 residues: Fatty acid oxidation complex subunit alpha (715 aa).

The segment at 1–190 is enoyl-CoA hydratase/isomerase; sequence MIYQGKAITV…KVGAVDAVVA (190 aa). D297 is a substrate binding site. The segment at 312 to 715 is 3-hydroxyacyl-CoA dehydrogenase; the sequence is KDVKLAAVLG…MAKNGQKFFG (404 aa). Residues M325, D344, 401-403, K408, and S430 contribute to the NAD(+) site; that span reads VVE. Catalysis depends on H451, which acts as the For 3-hydroxyacyl-CoA dehydrogenase activity. Residue N454 participates in NAD(+) binding. Positions 501 and 660 each coordinate substrate.

In the N-terminal section; belongs to the enoyl-CoA hydratase/isomerase family. The protein in the C-terminal section; belongs to the 3-hydroxyacyl-CoA dehydrogenase family. Heterotetramer of two alpha chains (FadB) and two beta chains (FadA).

It carries out the reaction a (3S)-3-hydroxyacyl-CoA + NAD(+) = a 3-oxoacyl-CoA + NADH + H(+). It catalyses the reaction a (3S)-3-hydroxyacyl-CoA = a (2E)-enoyl-CoA + H2O. The enzyme catalyses a 4-saturated-(3S)-3-hydroxyacyl-CoA = a (3E)-enoyl-CoA + H2O. The catalysed reaction is (3S)-3-hydroxybutanoyl-CoA = (3R)-3-hydroxybutanoyl-CoA. It carries out the reaction a (3Z)-enoyl-CoA = a 4-saturated (2E)-enoyl-CoA. It catalyses the reaction a (3E)-enoyl-CoA = a 4-saturated (2E)-enoyl-CoA. It functions in the pathway lipid metabolism; fatty acid beta-oxidation. Its function is as follows. Involved in the aerobic and anaerobic degradation of long-chain fatty acids via beta-oxidation cycle. Catalyzes the formation of 3-oxoacyl-CoA from enoyl-CoA via L-3-hydroxyacyl-CoA. It can also use D-3-hydroxyacyl-CoA and cis-3-enoyl-CoA as substrate. In Pseudomonas aeruginosa (strain LESB58), this protein is Fatty acid oxidation complex subunit alpha.